Consider the following 98-residue polypeptide: NADH-ubiquinone oxidoreductase chain 4L (98 aa).

The next 3 membrane-spanning stretches (helical) occupy residues 1 to 21, 26 to 46, and 61 to 81; these read MPSISTNIILAFTTALLGTLI, LMSSLLCLEGMMLSMFILTSL, and IILLVFAACEAAIGLALLVMV.

The protein belongs to the complex I subunit 4L family. As to quaternary structure, core subunit of respiratory chain NADH dehydrogenase (Complex I) which is composed of 45 different subunits.

It is found in the mitochondrion inner membrane. It carries out the reaction a ubiquinone + NADH + 5 H(+)(in) = a ubiquinol + NAD(+) + 4 H(+)(out). Functionally, core subunit of the mitochondrial membrane respiratory chain NADH dehydrogenase (Complex I) which catalyzes electron transfer from NADH through the respiratory chain, using ubiquinone as an electron acceptor. Part of the enzyme membrane arm which is embedded in the lipid bilayer and involved in proton translocation. The chain is NADH-ubiquinone oxidoreductase chain 4L (MT-ND4L) from Otolemur crassicaudatus (Brown greater galago).